Reading from the N-terminus, the 274-residue chain is Cytochrome b-c1 complex subunit Rieske, mitochondrial (274 aa).

Residues 79–103 (SHTDIKVPDFSEYRRLEVLDSTKSS) lie on the Mitochondrial matrix side of the membrane. The helical transmembrane segment at 104–140 (RESSEARKGFSYLVTGVTTVGVAYAAKNAVTQFVSSM) threads the bilayer. Over 141–274 (SASADVLALA…FTSDDMVIVG (134 aa)) the chain is Mitochondrial intermembrane. The Rieske domain occupies 187-272 (EAAVELSQLR…YEFTSDDMVI (86 aa)). [2Fe-2S] cluster-binding residues include Cys217, His219, Cys236, His239, and Ser241. A disulfide bond links Cys222 and Cys238.

This sequence belongs to the Rieske iron-sulfur protein family. In terms of assembly, component of the ubiquinol-cytochrome c oxidoreductase (cytochrome b-c1 complex, complex III, CIII), a multisubunit enzyme composed of 11 subunits. The complex is composed of 3 respiratory subunits cytochrome b, cytochrome c1 and Rieske protein UQCRFS1, 2 core protein subunits UQCRC1/QCR1 and UQCRC2/QCR2, and 6 low-molecular weight protein subunits UQCRH/QCR6, UQCRB/QCR7, UQCRQ/QCR8, UQCR10/QCR9, UQCR11/QCR10 and subunit 9, the cleavage product of Rieske protein UQCRFS1. The complex exists as an obligatory dimer and forms supercomplexes (SCs) in the inner mitochondrial membrane with NADH-ubiquinone oxidoreductase (complex I, CI) and cytochrome c oxidase (complex IV, CIV), resulting in different assemblies (supercomplex SCI(1)III(2)IV(1) and megacomplex MCI(2)III(2)IV(2)). Incorporation of the Rieske protein UQCRFS1 is the penultimate step in complex III assembly. Interacts with TTC19, which is involved in the clearance of UQCRFS1 fragments. As to quaternary structure, component of the ubiquinol-cytochrome c oxidoreductase (cytochrome b-c1 complex, complex III, CIII). Subunit 9 corresponds to the mitochondrial targeting sequence (MTS) of Rieske protein UQCRFS1. It is retained after processing and incorporated inside complex III, where it remains bound to the complex and localizes between the 2 core subunits UQCRC1/QCR1 and UQCRC2/QCR2. [2Fe-2S] cluster serves as cofactor. Post-translationally, proteolytic processing is necessary for the correct insertion of UQCRFS1 in the complex III dimer. Several fragments are generated during UQCRFS1 insertion, most probably due to the endogenous matrix-processing peptidase (MPP) activity of the 2 core protein subunits UQCRC1/QCR1 and UQCRC2/QCR2, which are homologous to the 2 mitochondrial-processing peptidase (MPP) subunits beta-MPP and alpha-MPP respectively. The action of the protease is also necessary for the clearance of the UQCRFS1 fragments.

It localises to the mitochondrion inner membrane. The enzyme catalyses a quinol + 2 Fe(III)-[cytochrome c](out) = a quinone + 2 Fe(II)-[cytochrome c](out) + 2 H(+)(out). Functionally, component of the ubiquinol-cytochrome c oxidoreductase, a multisubunit transmembrane complex that is part of the mitochondrial electron transport chain which drives oxidative phosphorylation. The respiratory chain contains 3 multisubunit complexes succinate dehydrogenase (complex II, CII), ubiquinol-cytochrome c oxidoreductase (cytochrome b-c1 complex, complex III, CIII) and cytochrome c oxidase (complex IV, CIV), that cooperate to transfer electrons derived from NADH and succinate to molecular oxygen, creating an electrochemical gradient over the inner membrane that drives transmembrane transport and the ATP synthase. The cytochrome b-c1 complex catalyzes electron transfer from ubiquinol to cytochrome c, linking this redox reaction to translocation of protons across the mitochondrial inner membrane, with protons being carried across the membrane as hydrogens on the quinol. In the process called Q cycle, 2 protons are consumed from the matrix, 4 protons are released into the intermembrane space and 2 electrons are passed to cytochrome c. The Rieske protein is a catalytic core subunit containing a [2Fe-2S] iron-sulfur cluster. It cycles between 2 conformational states during catalysis to transfer electrons from the quinol bound in the Q(0) site in cytochrome b to cytochrome c1. Incorporation of UQCRFS1 is the penultimate step in complex III assembly. Component of the ubiquinol-cytochrome c oxidoreductase (cytochrome b-c1 complex, complex III, CIII). UQCRFS1 undergoes proteolytic processing once it is incorporated in the complex III dimer. One of the fragments, called subunit 9, corresponds to its mitochondrial targeting sequence (MTS). The proteolytic processing is necessary for the correct insertion of UQCRFS1 in the complex III dimer, but the persistence of UQCRFS1-derived fragments may prevent newly imported UQCRFS1 to be processed and assembled into complex III and is detrimental for the complex III structure and function. The polypeptide is Cytochrome b-c1 complex subunit Rieske, mitochondrial (UQCRFS1) (Gorilla gorilla gorilla (Western lowland gorilla)).